The primary structure comprises 177 residues: Large ribosomal subunit protein uL6 (177 aa).

This sequence belongs to the universal ribosomal protein uL6 family. As to quaternary structure, part of the 50S ribosomal subunit.

This protein binds to the 23S rRNA, and is important in its secondary structure. It is located near the subunit interface in the base of the L7/L12 stalk, and near the tRNA binding site of the peptidyltransferase center. The sequence is that of Large ribosomal subunit protein uL6 from Hahella chejuensis (strain KCTC 2396).